We begin with the raw amino-acid sequence, 243 residues long: Peptidase E (243 aa).

Catalysis depends on charge relay system residues serine 118, aspartate 133, and histidine 155.

The protein belongs to the peptidase S51 family.

The protein resides in the cytoplasm. The catalysed reaction is Dipeptidase E catalyzes the hydrolysis of dipeptides Asp-|-Xaa. It does not act on peptides with N-terminal Glu, Asn or Gln, nor does it cleave isoaspartyl peptides.. Hydrolyzes dipeptides containing N-terminal aspartate residues. May play a role in allowing the cell to use peptide aspartate to spare carbon otherwise required for the synthesis of the aspartate family of amino acids. The chain is Peptidase E from Streptomyces coelicolor (strain ATCC BAA-471 / A3(2) / M145).